A 551-amino-acid polypeptide reads, in one-letter code: Putative ABC transporter ATP-binding protein BT9727_3105 (551 aa).

ABC transporter domains follow at residues 5-243 (AEIN…FRPF) and 293-525 (LSAE…SINR). Residues 39–46 (GGSGSGKT) and 327–334 (GKNGTGKS) contribute to the ATP site.

The protein belongs to the ABC transporter superfamily.

The protein resides in the cell membrane. Functionally, probably part of an ABC transporter complex. Responsible for energy coupling to the transport system. The protein is Putative ABC transporter ATP-binding protein BT9727_3105 of Bacillus thuringiensis subsp. konkukian (strain 97-27).